A 399-amino-acid polypeptide reads, in one-letter code: (R)-2-hydroxy-4-methylpentanoate CoA-transferase (399 aa).

The active-site Nucleophile is the aspartate 171.

This sequence belongs to the CoA-transferase III family. In terms of assembly, homodimer.

The catalysed reaction is 4-methylpentanoyl-CoA + (2R)-hydroxy-4-methylpentanoate = (R)-2-hydroxy-4-methylpentanoyl-CoA + 4-methylpentanoate. Its pathway is amino-acid degradation; L-leucine degradation. Functionally, involved in the reductive branch of L-leucine fermentation. Catalyzes the transfer of the CoA moiety from 4-methylpentanoyl-CoA (isocaproyl-CoA) to (R)-2-hydroxy-4-methylpentanoate ((R)-2-hydroxyisocaproate), leading to the formation of (R)-2-hydroxy-4-methylpentanoyl-CoA. Other CoA thioesters, such as acetyl-CoA or butyryl-CoA, are not accepted as substrates. The chain is (R)-2-hydroxy-4-methylpentanoate CoA-transferase from Clostridioides difficile (Peptoclostridium difficile).